Reading from the N-terminus, the 466-residue chain is Exodeoxyribonuclease 7 large subunit (466 aa).

Belongs to the XseA family. Heterooligomer composed of large and small subunits.

The protein resides in the cytoplasm. The catalysed reaction is Exonucleolytic cleavage in either 5'- to 3'- or 3'- to 5'-direction to yield nucleoside 5'-phosphates.. Functionally, bidirectionally degrades single-stranded DNA into large acid-insoluble oligonucleotides, which are then degraded further into small acid-soluble oligonucleotides. The chain is Exodeoxyribonuclease 7 large subunit from Vesicomyosocius okutanii subsp. Calyptogena okutanii (strain HA).